The chain runs to 273 residues: UPF0380 protein YubP (273 aa).

It belongs to the UPF0380 family.

The polypeptide is UPF0380 protein YubP (yubP) (Escherichia coli (strain K12)).